The sequence spans 311 residues: tRNA-cytidine(32) 2-sulfurtransferase (311 aa).

Positions 47–52 (SGGKDS) match the PP-loop motif motif. The [4Fe-4S] cluster site is built by Cys122, Cys125, and Cys213.

It belongs to the TtcA family. As to quaternary structure, homodimer. Mg(2+) is required as a cofactor. [4Fe-4S] cluster serves as cofactor.

The protein resides in the cytoplasm. The enzyme catalyses cytidine(32) in tRNA + S-sulfanyl-L-cysteinyl-[cysteine desulfurase] + AH2 + ATP = 2-thiocytidine(32) in tRNA + L-cysteinyl-[cysteine desulfurase] + A + AMP + diphosphate + H(+). It functions in the pathway tRNA modification. Its function is as follows. Catalyzes the ATP-dependent 2-thiolation of cytidine in position 32 of tRNA, to form 2-thiocytidine (s(2)C32). The sulfur atoms are provided by the cysteine/cysteine desulfurase (IscS) system. The sequence is that of tRNA-cytidine(32) 2-sulfurtransferase from Salmonella paratyphi B (strain ATCC BAA-1250 / SPB7).